Consider the following 501-residue polypeptide: Glycerol kinase (501 aa).

Residue Thr11 coordinates ADP. ATP is bound by residues Thr11, Thr12, and Ser13. Thr11 is a sn-glycerol 3-phosphate binding site. ADP is bound at residue Arg15. The sn-glycerol 3-phosphate site is built by Arg81, Glu82, Tyr133, and Asp242. Residues Arg81, Glu82, Tyr133, Asp242, and Gln243 each contribute to the glycerol site. 2 residues coordinate ADP: Thr264 and Gly307. ATP contacts are provided by Thr264, Gly307, Gln311, and Gly409. Residues Gly409 and Asn413 each contribute to the ADP site.

It belongs to the FGGY kinase family.

The catalysed reaction is glycerol + ATP = sn-glycerol 3-phosphate + ADP + H(+). It functions in the pathway polyol metabolism; glycerol degradation via glycerol kinase pathway; sn-glycerol 3-phosphate from glycerol: step 1/1. Inhibited by fructose 1,6-bisphosphate (FBP). In terms of biological role, key enzyme in the regulation of glycerol uptake and metabolism. Catalyzes the phosphorylation of glycerol to yield sn-glycerol 3-phosphate. This chain is Glycerol kinase, found in Borreliella afzelii (strain PKo) (Borrelia afzelii).